A 194-amino-acid chain; its full sequence is 5-formyltetrahydrofolate cyclo-ligase (194 aa).

Residues 6 to 10 (KSQLR), 139 to 146 (GRGAGFYD), and Asp177 contribute to the ATP site.

This sequence belongs to the 5-formyltetrahydrofolate cyclo-ligase family.

It carries out the reaction (6S)-5-formyl-5,6,7,8-tetrahydrofolate + ATP = (6R)-5,10-methenyltetrahydrofolate + ADP + phosphate. The protein operates within one-carbon metabolism; tetrahydrofolate interconversion. Involved in the removal of 5-formyltetrahydrofolate. In vitro, it is a potent inhibitor of various folate-dependent enzymes in the C1 metabolism network and in vivo it might function as a folate storage. 5-formyltetrahydrofolate is also used as an antifolate rescue agent in cancer chemotherapy. Catalyzes the irreversible ATP-dependent transformation of 5-formyltetrahydrofolate (5-CHO-THF) to form 5,10-methenyltetrahydrofolate (5,10-CH=THF). The reverse reaction is catalyzed by the serine hydroxymethyltransferase GlyA (SHMT). In Mycolicibacterium smegmatis (strain ATCC 700084 / mc(2)155) (Mycobacterium smegmatis), this protein is 5-formyltetrahydrofolate cyclo-ligase.